The primary structure comprises 206 residues: Large ribosomal subunit protein uL4 (206 aa).

This sequence belongs to the universal ribosomal protein uL4 family. As to quaternary structure, part of the 50S ribosomal subunit.

Its function is as follows. One of the primary rRNA binding proteins, this protein initially binds near the 5'-end of the 23S rRNA. It is important during the early stages of 50S assembly. It makes multiple contacts with different domains of the 23S rRNA in the assembled 50S subunit and ribosome. In terms of biological role, forms part of the polypeptide exit tunnel. The chain is Large ribosomal subunit protein uL4 from Paracoccus denitrificans (strain Pd 1222).